A 335-amino-acid chain; its full sequence is Ferrochelatase (335 aa).

Positions 211 and 290 each coordinate Fe cation.

It belongs to the ferrochelatase family.

The protein localises to the cytoplasm. It catalyses the reaction heme b + 2 H(+) = protoporphyrin IX + Fe(2+). The protein operates within porphyrin-containing compound metabolism; protoheme biosynthesis; protoheme from protoporphyrin-IX: step 1/1. Catalyzes the ferrous insertion into protoporphyrin IX. This chain is Ferrochelatase, found in Sulfurihydrogenibium sp. (strain YO3AOP1).